The following is a 584-amino-acid chain: uncharacterized protein (584 aa).

Residues 1-27 form the signal peptide; it reads MGLSRKKIFTWPLLLTGMAVVSTTFSS. The N-palmitoyl cysteine moiety is linked to residue Cys-28. The S-diacylglycerol cysteine moiety is linked to residue Cys-28. Positions 530–570 are disordered; the sequence is NLPKKEGSTNQANQQTNQTNRSTDATKKDSSSDETNKNPLA. Residues 538-552 are compositionally biased toward low complexity; that stretch reads TNQANQQTNQTNRST. Residues 553–565 are compositionally biased toward basic and acidic residues; the sequence is DATKKDSSSDETN.

The protein belongs to the MG067/MG068/MG395 family.

The protein localises to the cell membrane. This is an uncharacterized protein from Mycoplasmoides gallisepticum (strain R(low / passage 15 / clone 2)) (Mycoplasma gallisepticum).